A 331-amino-acid polypeptide reads, in one-letter code: Probable allantoicase (331 aa).

This sequence belongs to the allantoicase family.

The enzyme catalyses allantoate + H2O = (S)-ureidoglycolate + urea. It participates in nitrogen metabolism; (S)-allantoin degradation; (S)-ureidoglycolate from allantoate (aminidohydrolase route): step 1/1. The polypeptide is Probable allantoicase (Pseudomonas savastanoi pv. phaseolicola (strain 1448A / Race 6) (Pseudomonas syringae pv. phaseolicola (strain 1448A / Race 6))).